Consider the following 227-residue polypeptide: Lectin (227 aa).

Residues 1-28 (MTMTSTTTKAMAMAAAVLAAAAVAATNA) form the signal peptide. Gln29 is modified (pyrrolidone carboxylic acid). 4 Chitin-binding type-1 domains span residues 29-70 (QTCG…ACCS), 71-113 (SQRC…PCRA), 114-156 (DIKC…ACCP), and 157-199 (EKRC…GCYK). Disulfide bonds link Cys31-Cys46, Cys40-Cys52, Cys45-Cys59, Cys63-Cys68, Cys74-Cys89, Cys83-Cys95, Cys88-Cys102, Cys106-Cys111, Cys117-Cys132, Cys126-Cys138, Cys131-Cys145, Cys149-Cys154, Cys160-Cys175, Cys169-Cys181, Cys174-Cys188, and Cys192-Cys197. 38-40 (MIC) lines the substrate pocket. 90–101 (SQYGYCGFGSEY) lines the substrate pocket. 142–143 (SE) provides a ligand contact to substrate. Residues 202-227 (DGMAAILANNQSVSFEGIIESVAELV) constitute a propeptide that is removed on maturation. Residue Asn211 is glycosylated (N-linked (GlcNAc...) asparagine).

Its function is as follows. N-acetyl-D-glucosamine binding lectin. The polypeptide is Lectin (Oryza sativa subsp. indica (Rice)).